Reading from the N-terminus, the 701-residue chain is Protein UL29/UL28 (701 aa).

A disordered region spans residues 1–33 (MSGRRKGCSAATASSSSSSPPSRLPPLPGHARR).

This sequence belongs to the herpesviridae US22 family. As to quaternary structure, interacts with UL38 and host HDAC1; these interactions are necessary for the HDAC1 interaction with UL38. Interacts with host MTA2.

The protein localises to the virion. It localises to the host nucleus. It is found in the host cytoplasm. Functionally, contributes to activation of immediate-early gene expression. This chain is Protein UL29/UL28 (UL29), found in Homo sapiens (Human).